Here is a 159-residue protein sequence, read N- to C-terminus: MIAFAKQFRVRISPQKARLVCQLIVGKKTADAQNILSNTPKKAATLIAKLLNSAIANATNNHGMNGDALYVFECVANQGPSMKRTIPRAKGSSNMITKRSSNLVVKLSDNPNERQELIKQQKALVKKRVEGQQKAKMARQKAVTSVVKAPSKTQGGVQK.

Residues 129 to 159 (VEGQQKAKMARQKAVTSVVKAPSKTQGGVQK) are disordered.

Belongs to the universal ribosomal protein uL22 family. Part of the 50S ribosomal subunit.

Functionally, this protein binds specifically to 23S rRNA; its binding is stimulated by other ribosomal proteins, e.g. L4, L17, and L20. It is important during the early stages of 50S assembly. It makes multiple contacts with different domains of the 23S rRNA in the assembled 50S subunit and ribosome. In terms of biological role, the globular domain of the protein is located near the polypeptide exit tunnel on the outside of the subunit, while an extended beta-hairpin is found that lines the wall of the exit tunnel in the center of the 70S ribosome. This is Large ribosomal subunit protein uL22 (rplV) from Mycoplasma pneumoniae (strain ATCC 29342 / M129 / Subtype 1) (Mycoplasmoides pneumoniae).